The following is a 335-amino-acid chain: DNA-directed RNA polymerase subunit alpha (335 aa).

Residues 1–233 form an alpha N-terminal domain (alpha-NTD) region; it reads MVREKITVST…DLFIPFLHME (233 aa). Residues 265 to 335 are alpha C-terminal domain (alpha-CTD); sequence KEIALKSIFI…KQLVIFLPKK (71 aa).

It belongs to the RNA polymerase alpha chain family. In plastids the minimal PEP RNA polymerase catalytic core is composed of four subunits: alpha, beta, beta', and beta''. When a (nuclear-encoded) sigma factor is associated with the core the holoenzyme is formed, which can initiate transcription.

It localises to the plastid. It is found in the chloroplast. The enzyme catalyses RNA(n) + a ribonucleoside 5'-triphosphate = RNA(n+1) + diphosphate. In terms of biological role, DNA-dependent RNA polymerase catalyzes the transcription of DNA into RNA using the four ribonucleoside triphosphates as substrates. The sequence is that of DNA-directed RNA polymerase subunit alpha from Coffea arabica (Arabian coffee).